A 130-amino-acid polypeptide reads, in one-letter code: DNA-directed RNA polymerase subunit omega (130 aa).

Residues 110 to 130 (EELLKGLEGLAPPEEQPEEEE) form a disordered region.

Belongs to the RNA polymerase subunit omega family. The RNAP catalytic core consists of 2 alpha, 1 beta, 1 beta' and 1 omega subunit. When a sigma factor is associated with the core the holoenzyme is formed, which can initiate transcription.

It catalyses the reaction RNA(n) + a ribonucleoside 5'-triphosphate = RNA(n+1) + diphosphate. Promotes RNA polymerase assembly. Latches the N- and C-terminal regions of the beta' subunit thereby facilitating its interaction with the beta and alpha subunits. This Afipia carboxidovorans (strain ATCC 49405 / DSM 1227 / KCTC 32145 / OM5) (Oligotropha carboxidovorans) protein is DNA-directed RNA polymerase subunit omega.